Reading from the N-terminus, the 156-residue chain is Calglandulin (156 aa).

EF-hand domains lie at 8-43 (EQIT…IGIN), 44-79 (PTKR…YHEK), 82-117 (NQDE…AGEP), and 118-153 (LNEH…ESFK). 5 residues coordinate Ca(2+): Asp131, Asp133, Asp135, Thr137, and Glu142.

It belongs to the calmodulin family. Calglandulin subfamily. Expressed by the venom gland.

It localises to the cytoplasm. Functionally, may be involved in the cellular control mechanism of the secretion of toxins from the gland into the venom. The protein is Calglandulin of Hoplocephalus stephensii (Stephens's banded snake).